A 466-amino-acid polypeptide reads, in one-letter code: Eukaryotic translation initiation factor 3 subunit M (466 aa).

The disordered stretch occupies residues 40 to 62; sequence EISPLLEPLRQQEQSDAEPDRKQ. One can recognise a PCI domain in the interval 211–378; that stretch reads AQTHILQALQ…SEFLVHRATY (168 aa). Residues 424 to 466 form a disordered region; sequence AAEEAAQGKSNDKGNKSGDRRQRHGNNQQSQQQQQPQEVAAAE. The segment covering 433 to 443 has biased composition (basic and acidic residues); sequence SNDKGNKSGDR. Residues 451-460 show a composition bias toward low complexity; sequence QQSQQQQQPQ.

Belongs to the eIF-3 subunit M family. In terms of assembly, component of the eukaryotic translation initiation factor 3 (eIF-3) complex.

It is found in the cytoplasm. In terms of biological role, component of the eukaryotic translation initiation factor 3 (eIF-3) complex, which is involved in protein synthesis of a specialized repertoire of mRNAs and, together with other initiation factors, stimulates binding of mRNA and methionyl-tRNAi to the 40S ribosome. The eIF-3 complex specifically targets and initiates translation of a subset of mRNAs involved in cell proliferation. In Aspergillus oryzae (strain ATCC 42149 / RIB 40) (Yellow koji mold), this protein is Eukaryotic translation initiation factor 3 subunit M.